Consider the following 30-residue polypeptide: Glucagon-like peptide (30 aa).

Arginine 30 carries the post-translational modification Arginine amide.

This sequence belongs to the glucagon family.

The protein localises to the secreted. This chain is Glucagon-like peptide, found in Anguilla anguilla (European freshwater eel).